Reading from the N-terminus, the 467-residue chain is Replication factor A 51 kDa subunit (467 aa).

The segment at residues 23–105 is a DNA-binding region (OB); that stretch reads WWIRARVADK…SNVNNDYELT (83 aa). The segment at 313–335 adopts a C4-type zinc-finger fold; it reads CPTCNKKVTEEGAQGDRFRCEKC.

This sequence belongs to the replication factor A protein 1 family. In terms of assembly, component of the heterotrimeric canonical replication protein A complex (RPA). Post-translationally, the N-terminus is blocked.

The protein localises to the nucleus. In terms of biological role, as part of the heterotrimeric replication protein A complex (RPA/RP-A), binds and stabilizes single-stranded DNA intermediates, that form during DNA replication or upon DNA stress. It prevents their reannealing and in parallel, recruits and activates different proteins and complexes involved in DNA metabolism. Thereby, it plays an essential role both in DNA replication and the cellular response to DNA damage. This is Replication factor A 51 kDa subunit (RPA1) from Crithidia fasciculata.